A 397-amino-acid polypeptide reads, in one-letter code: S-adenosylmethionine synthase (397 aa).

H16 is an ATP binding site. D18 contacts Mg(2+). E44 contributes to the K(+) binding site. Positions 57 and 100 each coordinate L-methionine. A flexible loop region spans residues 100-110 (QSPDIAQGVDN). ATP is bound by residues 175 to 177 (DGK), 242 to 243 (RF), D251, 257 to 258 (RK), A274, and K278. D251 serves as a coordination point for L-methionine. K282 serves as a coordination point for L-methionine.

Belongs to the AdoMet synthase family. In terms of assembly, homotetramer; dimer of dimers. It depends on Mg(2+) as a cofactor. K(+) is required as a cofactor.

The protein resides in the cytoplasm. It catalyses the reaction L-methionine + ATP + H2O = S-adenosyl-L-methionine + phosphate + diphosphate. Its pathway is amino-acid biosynthesis; S-adenosyl-L-methionine biosynthesis; S-adenosyl-L-methionine from L-methionine: step 1/1. Catalyzes the formation of S-adenosylmethionine (AdoMet) from methionine and ATP. The overall synthetic reaction is composed of two sequential steps, AdoMet formation and the subsequent tripolyphosphate hydrolysis which occurs prior to release of AdoMet from the enzyme. The polypeptide is S-adenosylmethionine synthase (Leifsonia xyli subsp. xyli (strain CTCB07)).